The sequence spans 429 residues: Endo-beta-1,4-galactanase (429 aa).

Positions 1-21 are cleaved as a signal peptide; it reads MKSKVKMFFAAAIVWSACSST. A substrate-binding site is contributed by 146-149; it reads DPAK. Glutamate 194 functions as the Proton donor in the catalytic mechanism. Substrate is bound by residues 233 to 234 and histidine 267; that span reads TN. Glutamate 292 serves as the catalytic Nucleophile. A substrate-binding site is contributed by threonine 296. Ca(2+) is bound by residues aspartate 301, aspartate 303, histidine 305, and asparagine 307. Lysine 311 and aspartate 388 together coordinate substrate. Positions 396 and 399 each coordinate Ca(2+).

It belongs to the glycosyl hydrolase 53 family. The cofactor is Ca(2+).

The protein localises to the secreted. The catalysed reaction is The enzyme specifically hydrolyzes (1-&gt;4)-beta-D-galactosidic linkages in type I arabinogalactans.. In terms of biological role, involved in galactan degradation. Degrades arabinose-free galactan to galactooligosaccharides, producing galactotetraose as the main product along with galactotriose, galactobiose, and galactose. Is also able to degrade galactotetraose, galactotriose and galactobiose, suggesting an additional exo-mode of activity. May hydrolyze the beta-1,4-galactan linkages of the galactan portion of arabinogalactan type I, a pectic plant polysaccharide from which most of the arabinose has been removed. In Bacillus subtilis (strain 168), this protein is Endo-beta-1,4-galactanase.